We begin with the raw amino-acid sequence, 289 residues long: Acetyl-coenzyme A carboxylase carboxyl transferase subunit beta (289 aa).

One can recognise a CoA carboxyltransferase N-terminal domain in the interval 34-289; it reads MWVKCNKCGD…KLINMHQNSF (256 aa). Residues Cys-38, Cys-41, Cys-57, and Cys-60 each coordinate Zn(2+). The segment at 38–60 adopts a C4-type zinc-finger fold; sequence CNKCGDILYQNDLEKNYMVCNLC.

The protein belongs to the AccD/PCCB family. Acetyl-CoA carboxylase is a heterohexamer composed of biotin carboxyl carrier protein (AccB), biotin carboxylase (AccC) and two subunits each of ACCase subunit alpha (AccA) and ACCase subunit beta (AccD). Zn(2+) serves as cofactor.

The protein localises to the cytoplasm. It catalyses the reaction N(6)-carboxybiotinyl-L-lysyl-[protein] + acetyl-CoA = N(6)-biotinyl-L-lysyl-[protein] + malonyl-CoA. It participates in lipid metabolism; malonyl-CoA biosynthesis; malonyl-CoA from acetyl-CoA: step 1/1. In terms of biological role, component of the acetyl coenzyme A carboxylase (ACC) complex. Biotin carboxylase (BC) catalyzes the carboxylation of biotin on its carrier protein (BCCP) and then the CO(2) group is transferred by the transcarboxylase to acetyl-CoA to form malonyl-CoA. This Clostridium botulinum (strain Langeland / NCTC 10281 / Type F) protein is Acetyl-coenzyme A carboxylase carboxyl transferase subunit beta.